Consider the following 434-residue polypeptide: MNIIVVGLSHKTASVDIREKVAFSPNSIEKPLHELVNLDGIVEGIIVSTCNRVEIYATTRDIAGGIARIRRFMAEYHHLAHDLLEPHLYSYHGEEAIRHVFRVASSLDSMVVGEPQILGQIKTSYGYAAEYKSSGIILNRFLHKAFSVAKRVRTETRIASSAVSVSFAAVELARKIFGNLTDKTVLLIGAGEMCELAARHFLTNGAKGVMVTNRTFERAQRLAEEFGGEAIPFDELFLHLHKADIVLTSTGAPHAIITPPDLEEVIKRRRMRPMFLIDIAVPRDIDPAVNEMDAVYLYDMDDLQQVVAANLEGRKQEADKAEAIIAEEIIQFYKWVATLEVTPTIVALRNRFEELRKAELERTLAGWKDAPPDAEKRLEALTSAFMNKLLHQPTTVLKKAGQGNRTDLYLDALRALFDLELGGTDTNESLELEE.

Substrate is bound by residues 49–52 (TCNR), Ser109, 114–116 (EPQ), and Gln120. The active-site Nucleophile is the Cys50. Position 189-194 (189-194 (GAGEMC)) interacts with NADP(+).

The protein belongs to the glutamyl-tRNA reductase family. Homodimer.

The enzyme catalyses (S)-4-amino-5-oxopentanoate + tRNA(Glu) + NADP(+) = L-glutamyl-tRNA(Glu) + NADPH + H(+). It participates in porphyrin-containing compound metabolism; protoporphyrin-IX biosynthesis; 5-aminolevulinate from L-glutamyl-tRNA(Glu): step 1/2. In terms of biological role, catalyzes the NADPH-dependent reduction of glutamyl-tRNA(Glu) to glutamate 1-semialdehyde (GSA). This chain is Glutamyl-tRNA reductase, found in Trichlorobacter lovleyi (strain ATCC BAA-1151 / DSM 17278 / SZ) (Geobacter lovleyi).